A 141-amino-acid chain; its full sequence is Nucleoside diphosphate kinase (141 aa).

Lys9, Phe57, Arg85, Thr91, Arg102, and Asn112 together coordinate ATP. His115 functions as the Pros-phosphohistidine intermediate in the catalytic mechanism.

Belongs to the NDK family. In terms of assembly, homotetramer. The cofactor is Mg(2+).

It localises to the cytoplasm. It catalyses the reaction a 2'-deoxyribonucleoside 5'-diphosphate + ATP = a 2'-deoxyribonucleoside 5'-triphosphate + ADP. It carries out the reaction a ribonucleoside 5'-diphosphate + ATP = a ribonucleoside 5'-triphosphate + ADP. Major role in the synthesis of nucleoside triphosphates other than ATP. The ATP gamma phosphate is transferred to the NDP beta phosphate via a ping-pong mechanism, using a phosphorylated active-site intermediate. In Chlamydia abortus (strain DSM 27085 / S26/3) (Chlamydophila abortus), this protein is Nucleoside diphosphate kinase.